The following is a 39-amino-acid chain: Potassium channel toxin alpha-KTx 2.23 (39 aa).

3 disulfides stabilise this stretch: C7–C29, C13–C34, and C17–C36.

Expressed by the venom gland.

The protein localises to the secreted. In terms of biological role, blocks human voltage-gated potassium (Kv) channels Kv1.1/KCNA1, Kv1.2/KCNA2 and Kv1.3/KCNA3. This Centruroides bonito (Scorpion) protein is Potassium channel toxin alpha-KTx 2.23.